The sequence spans 135 residues: Kappa-casein (135 aa).

O-linked (GalNAc...) threonine glycosylation is present at Thr96. Phosphoserine; alternate is present on Ser114. A glycan (O-linked (GalNAc...) serine; alternate) is linked at Ser114. The O-linked (GalNAc...) threonine glycan is linked to Thr131. Position 132 is a phosphoserine (Ser132).

This sequence belongs to the kappa-casein family. As to expression, mammary gland specific. Secreted in milk.

The protein resides in the secreted. Functionally, kappa-casein stabilizes micelle formation, preventing casein precipitation in milk. The chain is Kappa-casein (CSN3) from Equus grevyi (Grevy's zebra).